The primary structure comprises 303 residues: Probable 5-dehydro-4-deoxyglucarate dehydratase (303 aa).

This sequence belongs to the DapA family.

It catalyses the reaction 5-dehydro-4-deoxy-D-glucarate + H(+) = 2,5-dioxopentanoate + CO2 + H2O. The protein operates within carbohydrate acid metabolism; D-glucarate degradation; 2,5-dioxopentanoate from D-glucarate: step 2/2. The sequence is that of Probable 5-dehydro-4-deoxyglucarate dehydratase from Paracidovorax citrulli (strain AAC00-1) (Acidovorax citrulli).